We begin with the raw amino-acid sequence, 231 residues long: 5'-methylthioadenosine/S-adenosylhomocysteine nucleosidase (231 aa).

The active-site Proton acceptor is the E12. Substrate-binding positions include G78, M153, and 174-175 (ME). D198 serves as the catalytic Proton donor.

This sequence belongs to the PNP/UDP phosphorylase family. MtnN subfamily.

The catalysed reaction is S-adenosyl-L-homocysteine + H2O = S-(5-deoxy-D-ribos-5-yl)-L-homocysteine + adenine. It carries out the reaction S-methyl-5'-thioadenosine + H2O = 5-(methylsulfanyl)-D-ribose + adenine. It catalyses the reaction 5'-deoxyadenosine + H2O = 5-deoxy-D-ribose + adenine. It functions in the pathway amino-acid biosynthesis; L-methionine biosynthesis via salvage pathway; S-methyl-5-thio-alpha-D-ribose 1-phosphate from S-methyl-5'-thioadenosine (hydrolase route): step 1/2. Catalyzes the irreversible cleavage of the glycosidic bond in both 5'-methylthioadenosine (MTA) and S-adenosylhomocysteine (SAH/AdoHcy) to adenine and the corresponding thioribose, 5'-methylthioribose and S-ribosylhomocysteine, respectively. Also cleaves 5'-deoxyadenosine, a toxic by-product of radical S-adenosylmethionine (SAM) enzymes, into 5-deoxyribose and adenine. This is 5'-methylthioadenosine/S-adenosylhomocysteine nucleosidase from Bacillus thuringiensis subsp. konkukian (strain 97-27).